Here is a 54-residue protein sequence, read N- to C-terminus: Potassium channel toxin alpha-KTx 14.3 (54 aa).

The N-terminal stretch at M1 to G23 is a signal peptide.

It belongs to the short scorpion toxin superfamily. Potassium channel inhibitor family. Alpha-KTx 14 subfamily. Contains 3 disulfide bridges. In terms of tissue distribution, expressed by the venom gland.

It localises to the secreted. In terms of biological role, potential blocker of potassium channels. The protein is Potassium channel toxin alpha-KTx 14.3 of Olivierus martensii (Manchurian scorpion).